Here is a 278-residue protein sequence, read N- to C-terminus: Glutamate racemase (278 aa).

Substrate contacts are provided by residues 13–14 (DS) and 45–46 (YG). Cys76 functions as the Proton donor/acceptor in the catalytic mechanism. Position 77-78 (77-78 (NT)) interacts with substrate. Cys185 functions as the Proton donor/acceptor in the catalytic mechanism. 186 to 187 (TH) provides a ligand contact to substrate.

This sequence belongs to the aspartate/glutamate racemases family.

The enzyme catalyses L-glutamate = D-glutamate. It functions in the pathway cell wall biogenesis; peptidoglycan biosynthesis. Its function is as follows. Provides the (R)-glutamate required for cell wall biosynthesis. The protein is Glutamate racemase of Gloeothece citriformis (strain PCC 7424) (Cyanothece sp. (strain PCC 7424)).